Reading from the N-terminus, the 501-residue chain is Glycerol kinase (501 aa).

Thr-11 lines the ADP pocket. Positions 11, 12, and 13 each coordinate ATP. Sn-glycerol 3-phosphate is bound at residue Thr-11. Residue Arg-15 participates in ADP binding. Sn-glycerol 3-phosphate contacts are provided by Arg-81, Glu-82, Tyr-133, and Asp-242. Glycerol-binding residues include Arg-81, Glu-82, Tyr-133, Asp-242, and Gln-243. Residues Thr-264 and Gly-307 each contribute to the ADP site. Thr-264, Gly-307, Gln-311, and Gly-409 together coordinate ATP. The ADP site is built by Gly-409 and Asn-413.

It belongs to the FGGY kinase family.

The enzyme catalyses glycerol + ATP = sn-glycerol 3-phosphate + ADP + H(+). It functions in the pathway polyol metabolism; glycerol degradation via glycerol kinase pathway; sn-glycerol 3-phosphate from glycerol: step 1/1. Its activity is regulated as follows. Inhibited by fructose 1,6-bisphosphate (FBP). Its function is as follows. Key enzyme in the regulation of glycerol uptake and metabolism. Catalyzes the phosphorylation of glycerol to yield sn-glycerol 3-phosphate. This chain is Glycerol kinase, found in Borrelia garinii subsp. bavariensis (strain ATCC BAA-2496 / DSM 23469 / PBi) (Borreliella bavariensis).